Consider the following 161-residue polypeptide: Peroxynitrite isomerase 2 (161 aa).

The GXWXGXG signature appears at 17–23 (GTWAGQG). Heme b is bound at residue His-152.

It belongs to the nitrobindin family. In terms of assembly, homodimer. It depends on heme b as a cofactor.

The catalysed reaction is peroxynitrite = nitrate. It participates in nitrogen metabolism. In terms of biological role, heme-binding protein able to scavenge peroxynitrite and to protect free L-tyrosine against peroxynitrite-mediated nitration, by acting as a peroxynitrite isomerase that converts peroxynitrite to nitrate. Therefore, this protein likely plays a role in peroxynitrite sensing and in the detoxification of reactive nitrogen and oxygen species (RNS and ROS, respectively). Is able to bind nitric oxide (NO) in vitro, but may act as a sensor of peroxynitrite levels in vivo. The protein is Peroxynitrite isomerase 2 of Mycobacterium marinum (strain ATCC BAA-535 / M).